The sequence spans 134 residues: Transmembrane protein 100 (134 aa).

2 helical membrane passes run Cys-56–Tyr-76 and Ile-84–Ala-104. Residue Ser-121 is modified to Phosphoserine.

As to quaternary structure, interacts (via C-terminus) with TRPA1 and TRPV1. Interacts with TASOR. In terms of tissue distribution, expressed in neurons of the myenteric and submucosal plexuses in the gastric body, jejunum and proximal colon. Expressed in arterial endothelial cells and neurons of the central nervous system and peripheral nervous system. Expressed in umbilical artery endothelial cells (at protein level).

The protein resides in the cell membrane. Its subcellular location is the membrane. It localises to the perikaryon. The protein localises to the cytoplasm. It is found in the perinuclear region. The protein resides in the endoplasmic reticulum. Plays a role during embryonic arterial endothelium differentiation and vascular morphogenesis through the ACVRL1 receptor-dependent signaling pathway upon stimulation by bone morphogenetic proteins, such as GDF2/BMP9 and BMP10. Involved in the regulation of nociception, acting as a modulator of the interaction between TRPA1 and TRPV1, two molecular sensors and mediators of pain signals in dorsal root ganglia (DRG) neurons. Mechanistically, it weakens their interaction, thereby releasing the inhibition of TRPA1 by TRPV1 and increasing the single-channel open probability of the TRPA1-TRPV1 complex. This Homo sapiens (Human) protein is Transmembrane protein 100 (TMEM100).